The following is a 1904-amino-acid chain: Callose synthase 10 (1904 aa).

An HAT 1 repeat occupies 100-132 (VIKQKLAKRDGASIDRDRDIERLWEFYKLYKRR). The next 6 helical transmembrane spans lie at 491–511 (SFIR…IIAF), 532–552 (AIMN…AYSM), 562–582 (VIRF…YVKV), 594–614 (FFFH…LIFG), 661–681 (YVAF…FLQI), and 722–742 (VLAI…AIIG). The stretch at 678 to 701 (FLQIKPLVKPTNTIIHLPPFQYSW) is one LRR 1 repeat. LRR repeat units follow at residues 751–774 (LGEI…FAQN) and 925–948 (TLNL…LIRN). Residues 1074-1107 (YSSSELRSENEDGISILFYLQKIFPDEWENFLER) form an HAT 2 repeat. One copy of the LRR 4 repeat lies at 1159–1181 (FLERRGLGVDDASLTNMPRGFES). 9 consecutive transmembrane segments (helical) span residues 1474 to 1494 (FTTV…YVFL), 1529 to 1549 (FLVQ…ILEL), 1554 to 1574 (AIFS…TFSL), 1621 to 1641 (AFEV…DGGA), 1644 to 1664 (FVLL…APYI), 1747 to 1767 (LALY…FKLF), 1783 to 1803 (FLQG…IAMT), 1811 to 1831 (FACV…AITW), and 1853 to 1873 (AAMG…PFIS). Residues 1659-1691 (LFAPYIFNPSGFEWQKTVEDFEDWVSWLMYKGG) form an HAT 3 repeat.

This sequence belongs to the glycosyltransferase 48 family.

The protein localises to the cell membrane. It catalyses the reaction [(1-&gt;3)-beta-D-glucosyl](n) + UDP-alpha-D-glucose = [(1-&gt;3)-beta-D-glucosyl](n+1) + UDP + H(+). Involved in sporophytic and gametophytic development. Required for normal plant development and for the proper accumulation of callose at cell plates, cll walls and plasmodesmata. During pollen formation, required for the entry of microspores into mitosis. During plant growth and development, callose is found as a transitory component of the cell plate in dividing cells, is a major component of pollen mother cell walls and pollen tubes, and is found as a structural component of plasmodesmatal canals. Required for proper cell division and tissue patterning throughout plant organs, including stomatal patterning. In Arabidopsis thaliana (Mouse-ear cress), this protein is Callose synthase 10 (CALS10).